The primary structure comprises 510 residues: Glycerol kinase (510 aa).

Thr-13 lines the ADP pocket. ATP is bound by residues Thr-13 and Thr-14. Thr-13 contributes to the sn-glycerol 3-phosphate binding site. Arg-17 provides a ligand contact to ADP. Positions 83, 84, 135, and 255 each coordinate sn-glycerol 3-phosphate. Residues Arg-83, Glu-84, Tyr-135, Asp-255, and Gln-256 each coordinate glycerol. Residues Thr-277, Gly-321, Gly-421, and Asn-425 each contribute to the ADP site. 3 residues coordinate ATP: Thr-277, Gly-321, and Gly-421.

The protein belongs to the FGGY kinase family.

The catalysed reaction is glycerol + ATP = sn-glycerol 3-phosphate + ADP + H(+). Its pathway is polyol metabolism; glycerol degradation via glycerol kinase pathway; sn-glycerol 3-phosphate from glycerol: step 1/1. In terms of biological role, key enzyme in the regulation of glycerol uptake and metabolism. Catalyzes the phosphorylation of glycerol to yield sn-glycerol 3-phosphate. This chain is Glycerol kinase, found in Haloquadratum walsbyi (strain DSM 16790 / HBSQ001).